The chain runs to 99 residues: Small ribosomal subunit protein uS19 (99 aa).

The tract at residues P76–K99 is disordered.

The protein belongs to the universal ribosomal protein uS19 family.

Protein S19 forms a complex with S13 that binds strongly to the 16S ribosomal RNA. The protein is Small ribosomal subunit protein uS19 of Pelodictyon phaeoclathratiforme (strain DSM 5477 / BU-1).